The sequence spans 633 residues: MTNWSSKDSLKVYNVPYWGAGFFNINDAGHVTVAPDKSRPDAQIVLSDAIEQLRQSGLTTPVLLRFPDILKSRVDALFNAFGQAIEKSGYEGDYLCVYPIKVNQQRRVIETISQSYSDKPRLGLEAGSKPELLAVLSHHHEQGSVIVCNGYKDREYIRHALLGNLMGHKVYIVVEKPSELEMVLDESARLNIKPNIGVRAKLASTGSGMWESSGGSMSKFGLSASQILALIERLRGLGKLDCLQLLHFHLGSQIANIRDIQGGIRECGRFYAELRRLGANIEVVDVGGGLGVDYEGTRSQSHCSANYSLSEYANNVVWGIGDVCREFDLPHPTIISESGRALTAHHAVLVTNIIGAEGVEMNDISAPDDDAPTILQNMWKGWLDLRSEDPSLLEIFHDSVADLGDVNTQYTMGLLNLEQRAWAEMLHQNTCLALKELLNPVNRNHRALADELSEKLADKCFANFSLFQSLPDAWGIGQVFPVMPLAGLERPLTRRGILMDITCDSDGQVEHYVDGLGVESTLPMPVYGEHEECHVGFFLVGAYQEILGDLHNLFGDTHCAEVWLDDEGKMDIRNVVRGDTVDQLLRYVNIDPSVIRENYQRIVSHPALDDATRKALLDELELGLQGYAYLEDE.

At K101 the chain carries N6-(pyridoxal phosphate)lysine. Residue 284-294 (VDVGGGLGVDY) coordinates substrate.

The protein belongs to the Orn/Lys/Arg decarboxylase class-II family. SpeA subfamily. It depends on Mg(2+) as a cofactor. The cofactor is pyridoxal 5'-phosphate.

It catalyses the reaction L-arginine + H(+) = agmatine + CO2. It functions in the pathway amine and polyamine biosynthesis; agmatine biosynthesis; agmatine from L-arginine: step 1/1. Its function is as follows. Catalyzes the biosynthesis of agmatine from arginine. The protein is Biosynthetic arginine decarboxylase of Aeromonas hydrophila subsp. hydrophila (strain ATCC 7966 / DSM 30187 / BCRC 13018 / CCUG 14551 / JCM 1027 / KCTC 2358 / NCIMB 9240 / NCTC 8049).